The chain runs to 187 residues: Elongation factor P (187 aa).

Lys-33 bears the N6-(3,6-diaminohexanoyl)-5-hydroxylysine mark.

The protein belongs to the elongation factor P family. In terms of processing, may be beta-lysylated on the epsilon-amino group of Lys-33 by the combined action of EpmA and EpmB, and then hydroxylated on the C5 position of the same residue by EpmC (if this protein is present). Lysylation is critical for the stimulatory effect of EF-P on peptide-bond formation. The lysylation moiety may extend toward the peptidyltransferase center and stabilize the terminal 3-CCA end of the tRNA. Hydroxylation of the C5 position on Lys-33 may allow additional potential stabilizing hydrogen-bond interactions with the P-tRNA.

Its subcellular location is the cytoplasm. It functions in the pathway protein biosynthesis; polypeptide chain elongation. Its function is as follows. Involved in peptide bond synthesis. Alleviates ribosome stalling that occurs when 3 or more consecutive Pro residues or the sequence PPG is present in a protein, possibly by augmenting the peptidyl transferase activity of the ribosome. Modification of Lys-33 is required for alleviation. This chain is Elongation factor P, found in Blochmanniella floridana.